A 276-amino-acid polypeptide reads, in one-letter code: Large ribosomal subunit protein uL2 (276 aa).

The segment at 219-276 (TVRGSVMNPNDHPHGGGEGRAPIGRKSPMSPWGKPTLGYKTRQRNKPSDKYIVRKRKK) is disordered.

It belongs to the universal ribosomal protein uL2 family. As to quaternary structure, part of the 50S ribosomal subunit. Forms a bridge to the 30S subunit in the 70S ribosome.

Functionally, one of the primary rRNA binding proteins. Required for association of the 30S and 50S subunits to form the 70S ribosome, for tRNA binding and peptide bond formation. It has been suggested to have peptidyltransferase activity; this is somewhat controversial. Makes several contacts with the 16S rRNA in the 70S ribosome. This Oceanobacillus iheyensis (strain DSM 14371 / CIP 107618 / JCM 11309 / KCTC 3954 / HTE831) protein is Large ribosomal subunit protein uL2.